A 435-amino-acid polypeptide reads, in one-letter code: ATP-dependent protease ATPase subunit HslU (435 aa).

Residues Val-18, 60–65 (GVGKTE), Asp-248, Glu-313, and Arg-385 each bind ATP.

Belongs to the ClpX chaperone family. HslU subfamily. As to quaternary structure, a double ring-shaped homohexamer of HslV is capped on each side by a ring-shaped HslU homohexamer. The assembly of the HslU/HslV complex is dependent on binding of ATP.

It is found in the cytoplasm. Functionally, ATPase subunit of a proteasome-like degradation complex; this subunit has chaperone activity. The binding of ATP and its subsequent hydrolysis by HslU are essential for unfolding of protein substrates subsequently hydrolyzed by HslV. HslU recognizes the N-terminal part of its protein substrates and unfolds these before they are guided to HslV for hydrolysis. The chain is ATP-dependent protease ATPase subunit HslU from Xanthobacter autotrophicus (strain ATCC BAA-1158 / Py2).